The primary structure comprises 458 residues: Bifunctional protein GlmU (458 aa).

Positions 1–230 are pyrophosphorylase; sequence MSLPTYSKLN…EWQVAGINSK (230 aa). UDP-N-acetyl-alpha-D-glucosamine is bound by residues 14–17, K28, Q79, and 84–85; these read LAAG and GT. Mg(2+) is bound at residue D108. Positions 141, 155, 170, and 228 each coordinate UDP-N-acetyl-alpha-D-glucosamine. N228 lines the Mg(2+) pocket. Positions 231–251 are linker; it reads QDLAALERVYQGRYAARLLAK. Residues 252 to 458 are N-acetyltransferase; the sequence is GVTLADPSRI…NWKRPEKVKK (207 aa). The UDP-N-acetyl-alpha-D-glucosamine site is built by R334 and K352. H364 acts as the Proton acceptor in catalysis. Y367 and N378 together coordinate UDP-N-acetyl-alpha-D-glucosamine. Residues A381, 387–388, S406, A424, and R441 contribute to the acetyl-CoA site; that span reads NY.

In the N-terminal section; belongs to the N-acetylglucosamine-1-phosphate uridyltransferase family. It in the C-terminal section; belongs to the transferase hexapeptide repeat family. In terms of assembly, homotrimer. Requires Mg(2+) as cofactor.

It is found in the cytoplasm. The enzyme catalyses alpha-D-glucosamine 1-phosphate + acetyl-CoA = N-acetyl-alpha-D-glucosamine 1-phosphate + CoA + H(+). It carries out the reaction N-acetyl-alpha-D-glucosamine 1-phosphate + UTP + H(+) = UDP-N-acetyl-alpha-D-glucosamine + diphosphate. The protein operates within nucleotide-sugar biosynthesis; UDP-N-acetyl-alpha-D-glucosamine biosynthesis; N-acetyl-alpha-D-glucosamine 1-phosphate from alpha-D-glucosamine 6-phosphate (route II): step 2/2. It functions in the pathway nucleotide-sugar biosynthesis; UDP-N-acetyl-alpha-D-glucosamine biosynthesis; UDP-N-acetyl-alpha-D-glucosamine from N-acetyl-alpha-D-glucosamine 1-phosphate: step 1/1. It participates in bacterial outer membrane biogenesis; LPS lipid A biosynthesis. In terms of biological role, catalyzes the last two sequential reactions in the de novo biosynthetic pathway for UDP-N-acetylglucosamine (UDP-GlcNAc). The C-terminal domain catalyzes the transfer of acetyl group from acetyl coenzyme A to glucosamine-1-phosphate (GlcN-1-P) to produce N-acetylglucosamine-1-phosphate (GlcNAc-1-P), which is converted into UDP-GlcNAc by the transfer of uridine 5-monophosphate (from uridine 5-triphosphate), a reaction catalyzed by the N-terminal domain. This chain is Bifunctional protein GlmU, found in Methylobacillus flagellatus (strain ATCC 51484 / DSM 6875 / VKM B-1610 / KT).